Consider the following 472-residue polypeptide: Riboflavin transporter RibJ (472 aa).

At 1 to 11 (MLPCFTRKPVD) the chain is on the cytoplasmic side. The chain crosses the membrane as a helical span at residues 12–32 (HPLGFLVALSGLLMQLMSYGI). Over 33-58 (DNSYSIFSDDMHKDPSLGYPSVTTIS) the chain is Extracellular. The chain crosses the membrane as a helical span at residues 59 to 79 (LGNSVSLGLSPAFGVLCGFLV). Residues 80 to 85 (DRVPPR) lie on the Cytoplasmic side of the membrane. A helical membrane pass occupies residues 86 to 106 (LMMAVSTLMLFAGLWLSSTFA). Over 107-108 (HN) the chain is Extracellular. The N-linked (GlcNAc...) asparagine glycan is linked to asparagine 108. Residues 109-129 (VTAVTFSYCLLASISSACMLS) form a helical membrane-spanning segment. Topologically, residues 130-144 (PGAAATSSWFNRYQG) are cytoplasmic. Residues 145 to 165 (LAMGINFSGGGVGSAIIPSLA) form a helical membrane-spanning segment. Residues 166–179 (GKWVVAYGWRKTFR) are Extracellular-facing. A helical membrane pass occupies residues 180–196 (LMSAFCAIGVVATLLSA). Residues 197–271 (RRAPPKKEEA…TMFSRAFLGN (75 aa)) are Cytoplasmic-facing. Positions 200 to 248 (PPKKEEAGPSEYDEGQERQEQGEEEQAHTDEENRNNNNSNGETTPARRG) are disordered. The span at 214–233 (GQERQEQGEEEQAHTDEENR) shows a compositional bias: basic and acidic residues. Residues 272-292 (FFCWLIFSWAFYSLIYVAVPY) form a helical membrane-spanning segment. The Extracellular segment spans residues 293-315 (VSSMGKAGTVYADISPIPTDIAS). A helical transmembrane segment spans residues 316 to 336 (TLFTFYGVFQIVGSILVGWLA). The Cytoplasmic portion of the chain corresponds to 337–341 (TGTTN). The chain crosses the membrane as a helical span at residues 342 to 362 (EFAYVLCATIGGIFCAFLGFC). Residues 363–365 (RSY) are Extracellular-facing. A helical transmembrane segment spans residues 366–386 (VAFALLLCVIGFCMAGMFAVM). Residues 387–399 (PALIAERLYGPNL) lie on the Cytoplasmic side of the membrane. Residues 400 to 420 (GFYMGAVFLAGVVGGFSAPPI) traverse the membrane as a helical segment. The Extracellular portion of the chain corresponds to 421 to 434 (QAELQQRHYGNYTY). The N-linked (GlcNAc...) asparagine glycan is linked to asparagine 431. A helical transmembrane segment spans residues 435 to 455 (VCVFMSACMTLAAAVCYITMW). The Cytoplasmic portion of the chain corresponds to 456-472 (RDKRVRIVSAAAEAKLA).

This sequence belongs to the major facilitator superfamily. RibJ family.

It localises to the cell membrane. Transporter involved in riboflavin (vitamin B2) uptake. Also transports FMN and FAD. This chain is Riboflavin transporter RibJ, found in Trypanosoma cruzi (strain CL Brener).